Consider the following 301-residue polypeptide: Probable alpha-L-glutamate ligase (301 aa).

The ATP-grasp domain maps to 104-287; it reads LQLLSRKGIG…VADMIFEFIE (184 aa). Residues K141, 178–179, D187, and 211–213 contribute to the ATP site; these read EF and RSN. The Mg(2+) site is built by D248, E260, and N262. D248, E260, and N262 together coordinate Mn(2+).

This sequence belongs to the RimK family. It depends on Mg(2+) as a cofactor. Mn(2+) serves as cofactor.

This is Probable alpha-L-glutamate ligase from Vibrio atlanticus (strain LGP32) (Vibrio splendidus (strain Mel32)).